A 221-amino-acid chain; its full sequence is Ribosomal RNA small subunit methyltransferase Nep1 (221 aa).

S-adenosyl-L-methionine contacts are provided by residues Gly-174, Gly-179, and Ile-196–Leu-201.

The protein belongs to the class IV-like SAM-binding methyltransferase superfamily. RNA methyltransferase NEP1 family. As to quaternary structure, homodimer.

The catalysed reaction is a pseudouridine in rRNA + S-adenosyl-L-methionine = an N(1)-methylpseudouridine in rRNA + S-adenosyl-L-homocysteine + H(+). In terms of biological role, methyltransferase involved in ribosomal biogenesis. Specifically catalyzes the N1-methylation of the pseudouridine corresponding to position 914 in M.jannaschii 16S rRNA. This is Ribosomal RNA small subunit methyltransferase Nep1 from Pyrobaculum calidifontis (strain DSM 21063 / JCM 11548 / VA1).